Consider the following 593-residue polypeptide: Capsid protein 1 (593 aa).

It belongs to the NCLDV major capsid protein family.

The protein resides in the virion. The sequence is that of Capsid protein 1 from Acanthamoeba polyphaga mimivirus (APMV).